Consider the following 31-residue polypeptide: Ice-structuring glycoprotein 3 (31 aa).

O-linked (GalNAc...) threonine glycosylation is found at Thr-3, Thr-6, Thr-9, Thr-12, Thr-15, Thr-18, Thr-21, Thr-24, Thr-27, and Thr-30.

Post-translationally, O-linked glycans consist of Gal-GalNAc disaccharides. The three proteins may differ only in the number of repeating units of -Ala-Ala-Thr-.

It is found in the secreted. Functionally, antifreeze proteins lower the blood freezing point. This fish lives in antarctic waters where it experiences water temperatures near -1.9 degrees Celsius. Its blood has a freezing point of about -2.0 degrees Celsius, and 30% of the freezing-point depression is due mainly to the 3 major high molecular weight glycoproteins in the plasma. The chain is Ice-structuring glycoprotein 3 from Pagothenia borchgrevinki (Bald rockcod).